Consider the following 512-residue polypeptide: Mesoderm induction early response protein 1 (512 aa).

Over residues 1–16 the composition is skewed to low complexity; the sequence is MAEPSVESSSPGGSAT. 2 disordered regions span residues 1-63 and 75-173; these read MAEP…REGD and YGST…EDYI. Phosphoserine is present on S10. The segment covering 17 to 36 has biased composition (basic and acidic residues); it reads SDDHEFDPSADMLVHDFDDE. Composition is skewed to acidic residues over residues 37–46 and 83–105; these read RTLEEEEMME and EEDEEEEEEEEEGEDDEDADNDD. Residues 129 to 144 are compositionally biased toward polar residues; sequence QSSNDDPSQSVASQDA. S141 is subject to Phosphoserine. The residue at position 155 (Y155) is a Phosphotyrosine. Phosphoserine is present on residues S160 and S166. Over residues 160 to 173 the composition is skewed to acidic residues; that stretch reads SEVEEESEEDEDYI. One can recognise an ELM2 domain in the interval 180–278; sequence KEIMVGSMFQ…EALRRLRFNV (99 aa). The interval 180 to 284 is interaction with HDAC1; that stretch reads KEIMVGSMFQ…RFNVKAAREE (105 aa). Residue K239 forms a Glycyl lysine isopeptide (Lys-Gly) (interchain with G-Cter in SUMO2) linkage. In terms of domain architecture, SANT spans 283 to 335; that stretch reads EELSVWTEEECRNFEQGLKAYGKDFHLIQANKVRTRSVGECVAFYYMWKKSER. The disordered stretch occupies residues 366–512; sequence ESESAASSRA…KFEELENTDD (147 aa). Phosphoserine occurs at positions 367, 369, and 377. The segment covering 396-409 has biased composition (polar residues); it reads TVSTTNQNGVSSNG. The segment covering 414–423 has biased composition (basic and acidic residues); the sequence is LNKEEVKVEG. A Glycyl lysine isopeptide (Lys-Gly) (interchain with G-Cter in SUMO2) cross-link involves residue K420. Position 448 is a phosphothreonine (T448). The segment covering 462–475 has biased composition (basic and acidic residues); the sequence is ARNENDFDEKSERP. The segment covering 482-494 has biased composition (polar residues); the sequence is NSNGKESPGSSEF. Residues S483, S488, and S491 each carry the phosphoserine modification.

As to quaternary structure, interacts with HDAC1. Part of a complex containing at least CDYL, MIER1, MIER2, HDAC1 and HDAC2.

The protein resides in the nucleus. Its function is as follows. Transcriptional repressor regulating the expression of a number of genes including SP1 target genes. Probably functions through recruitment of HDAC1 a histone deacetylase involved in chromatin silencing. This is Mesoderm induction early response protein 1 (MIER1) from Pongo abelii (Sumatran orangutan).